A 146-amino-acid chain; its full sequence is Snaclec coagulation factor X-activating enzyme light chain 1 (146 aa).

An N-terminal signal peptide occupies residues 1 to 23; that stretch reads MGRFISVSFGCLVVFLSLSGTEA. An intrachain disulfide couples C27 to C38. In terms of domain architecture, C-type lectin spans 34 to 145; it reads YEQHCYKGFN…CNFIAPVVCK (112 aa). The N-linked (GlcNAc...) (complex) asparagine glycan is linked to N47. Intrachain disulfides connect C55/C144 and C121/C136.

The protein belongs to the snaclec family. Heterotrimer; disulfide-linked. The heterotrimer consists of 1 heavy chain (a metalloproteinase) and 2 light chains: LC1 and LC2. N-glycosylated; probably required for conformation. Removal of easily accessible sugars does not change its functional capacity, but removal of the core sugars with N-glycanase causes a virtually complete loss of enzyme activity, apparently as a result of major conformational changes in the molecule. Not O-glycosylated. Expressed by the venom gland.

It is found in the secreted. In terms of biological role, regulatory subunit of the blood coagulation factor X- and IX-activating enzyme. The enzyme activates coagulation factor X (F10) by cleaving the Arg-Ile bond and is also able to activate coagulation factor IX (F9) and protein S (PROS1) by specific cleavage of Arg-Ile and Arg-Val bonds. May serve as an exosite by which the enzyme recognizes and binds to the Gla domain of factor X (F10) and factor IX (F9) in a calcium-dependent manner. The protein is Snaclec coagulation factor X-activating enzyme light chain 1 (LC1) of Daboia siamensis (Eastern Russel's viper).